Consider the following 428-residue polypeptide: Methyl-branched lipid omega-hydroxylase (428 aa).

C379 provides a ligand contact to heme.

Belongs to the cytochrome P450 family. The cofactor is heme.

It catalyses the reaction a methyl-branched lipid + O2 + 2 reduced ferredoxin [iron-sulfur] cluster + 2 H(+) = an omega-hydroxy-methyl-branched lipid + H2O + 2 oxidized ferredoxin [iron-sulfur] cluster.. The enzyme catalyses cholest-4-en-3-one + 6 reduced [2Fe-2S]-[ferredoxin] + 3 O2 + 5 H(+) = (25R)-3-oxocholest-4-en-26-oate + 6 oxidized [2Fe-2S]-[ferredoxin] + 4 H2O. It participates in lipid metabolism; branched-chain fatty acid metabolism. In terms of biological role, primarily hydroxylates the omega-carbon of a number of methyl-branched lipids, including (2E,6E)-farnesol, phytanate, geranylgeraniol, 15-methylpalmitate and (2E,6E)-farnesyl diphosphate. Also catalyzes the sequential oxidation of the terminal methyl of cholest-4-en-3-one into (25R)-26-hydroxycholest-4-en-3-one (alcohol), (25R)-26-oxocholest-4-en-3-one (aldehyde), to finally yield the carboxylic acid (25R)-3-oxocholest-4-en-26-oate. Also able to sequentially oxidize cholesterol itself, not only cholest-4-en-3-one. The protein is Methyl-branched lipid omega-hydroxylase (cyp124) of Mycobacterium bovis (strain ATCC BAA-935 / AF2122/97).